A 539-amino-acid polypeptide reads, in one-letter code: Phosphoenolpyruvate carboxykinase (ATP) (539 aa).

The substrate site is built by Arg64, Tyr206, and Lys212. Residues Lys212, His231, and 247–255 contribute to the ATP site; that span reads GLSGTGKTT. Residues Lys212 and His231 each contribute to the Mn(2+) site. A Mn(2+)-binding site is contributed by Asp268. ATP contacts are provided by residues Glu296, Arg332, 448 to 449, and Thr454; that span reads RI. Arg332 lines the substrate pocket.

The protein belongs to the phosphoenolpyruvate carboxykinase (ATP) family. As to quaternary structure, monomer. Mn(2+) serves as cofactor.

The protein localises to the cytoplasm. The enzyme catalyses oxaloacetate + ATP = phosphoenolpyruvate + ADP + CO2. It participates in carbohydrate biosynthesis; gluconeogenesis. Involved in the gluconeogenesis. Catalyzes the conversion of oxaloacetate (OAA) to phosphoenolpyruvate (PEP) through direct phosphoryl transfer between the nucleoside triphosphate and OAA. The sequence is that of Phosphoenolpyruvate carboxykinase (ATP) from Sodalis glossinidius (strain morsitans).